Reading from the N-terminus, the 277-residue chain is MEMO1 family protein TRQ2_0860 (277 aa).

The protein belongs to the MEMO1 family.

In Thermotoga sp. (strain RQ2), this protein is MEMO1 family protein TRQ2_0860.